The primary structure comprises 533 residues: Zona pellucida sperm-binding protein 3 receptor (533 aa).

An N-terminal signal peptide occupies residues 1–28 (MFPRLQAVSAPALLQITLMAVLLAPVLG). Sushi domains lie at 29–88 (DCGP…FCAK), 89–150 (KRCR…ECVI), 151–215 (VKCD…TCEK), 216–275 (VICR…TCEP), 276–342 (NGCI…GCER), 343–408 (VCCP…ACES), and 409–467 (AVCL…KCEW). 14 cysteine pairs are disulfide-bonded: C30–C74, C60–C86, C91–C132, C118–C148, C153–C196, C182–C213, C218–C260, C246–C273, C278–C328, C312–C340, C345–C393, C378–C406, C411–C452, and C438–C465. 2 N-linked (GlcNAc...) asparagine glycosylation sites follow: N68 and N77. N-linked (GlcNAc...) asparagine glycans are attached at residues N185, N191, and N200. N-linked (GlcNAc...) asparagine glycosylation is found at N433 and N455.

Homooligomer; disulfide-linked. May contain 6-8 monomers per oligomer. In terms of processing, the N-terminus may be blocked. As to expression, testis. Not expressed in heart, brain, liver or kidney.

It localises to the cytoplasmic vesicle. The protein localises to the secretory vesicle. The protein resides in the acrosome lumen. In terms of biological role, probably involved in the formation of the dense core and M1 domain of the acrosome. May also regulate the release of certain secretory proteins following the acrosomal reaction. The polypeptide is Zona pellucida sperm-binding protein 3 receptor (ZP3R) (Cavia porcellus (Guinea pig)).